The sequence spans 599 residues: Potassium-transporting ATPase potassium-binding subunit (599 aa).

12 consecutive transmembrane segments (helical) span residues 8-28 (LLAL…IWLA), 61-81 (WQYA…VYAL), 133-153 (ALAV…FALF), 176-196 (AWLL…NGVI), 280-300 (LTNF…CFAF), 311-331 (WAVL…ITPA), 366-386 (INAS…AVIA), 391-411 (FTPL…VVFG), 416-436 (GLYG…LMIG), 456-476 (IAIL…VLAG), 521-541 (LLGL…LAIA), and 563-583 (LFVL…YVPA).

Belongs to the KdpA family. As to quaternary structure, the system is composed of three essential subunits: KdpA, KdpB and KdpC.

The protein resides in the cell inner membrane. Its function is as follows. Part of the high-affinity ATP-driven potassium transport (or Kdp) system, which catalyzes the hydrolysis of ATP coupled with the electrogenic transport of potassium into the cytoplasm. This subunit binds the periplasmic potassium ions and delivers the ions to the membrane domain of KdpB through an intramembrane tunnel. In Polaromonas naphthalenivorans (strain CJ2), this protein is Potassium-transporting ATPase potassium-binding subunit.